Here is a 331-residue protein sequence, read N- to C-terminus: Centriolar satellite-associated tubulin polyglutamylase complex regulator 1 (331 aa).

Residues 1-111 (MLSPERLALP…HCLLQLLCPD (111 aa)) form a required for interaction with PCM1 region. A required for interaction with TPGS1, LRRC49, and TTLL1 region spans residues 1–225 (MLSPERLALP…SCPPPALVKE (225 aa)). The segment at 112-331 (FPLELTQKAA…STEETDESET (220 aa)) is required for interaction with TPGS2. The tract at residues 292–331 (SCLPSRTPPRVGSPWKPLHRSRKLDAESDGSTEETDESET) is disordered. Acidic residues predominate over residues 318–331 (ESDGSTEETDESET). At Ser319 the chain carries Phosphoserine.

This sequence belongs to the CSTPP1 family. Interacts with PCM1. Interacts with TTLL1, TPGS1, TPGS2 and LRRC49; the interactions link CSTPP1 to the complex TPGC. Binds to alpha-tubulin.

Its subcellular location is the cytoplasm. It localises to the cytoskeleton. The protein localises to the microtubule organizing center. The protein resides in the centrosome. It is found in the centriolar satellite. Functionally, regulator of the tubulin polyglutamylase complex (TPGC) that controls cytoskeletal organization, nuclear shape, and cilium disassembly by balancing microtubule and actin assembly. Regulates the assembly and stability of the TPGC and thereby modulates polyglutamylation of the microtubule, which antagonizes MAP4 binding. In Mus musculus (Mouse), this protein is Centriolar satellite-associated tubulin polyglutamylase complex regulator 1.